The primary structure comprises 152 residues: Superoxide dismutase [Cu-Zn] 4AP (152 aa).

Cu cation-binding residues include His-45, His-47, and His-62. A disulfide bridge links Cys-56 with Cys-145. His-62, His-70, His-79, and Asp-82 together coordinate Zn(2+). Residue His-119 participates in Cu cation binding.

This sequence belongs to the Cu-Zn superoxide dismutase family. In terms of assembly, homodimer. Cu cation is required as a cofactor. The cofactor is Zn(2+).

The protein localises to the cytoplasm. It carries out the reaction 2 superoxide + 2 H(+) = H2O2 + O2. Its function is as follows. Destroys radicals which are normally produced within the cells and which are toxic to biological systems. The polypeptide is Superoxide dismutase [Cu-Zn] 4AP (SODCC.2) (Zea mays (Maize)).